The chain runs to 179 residues: Ribosome maturation factor RimM (179 aa).

In terms of domain architecture, PRC barrel spans 102–175 (VEMWWDRDLV…RIVVDPPPGL (74 aa)).

This sequence belongs to the RimM family. In terms of assembly, binds ribosomal protein uS19.

The protein resides in the cytoplasm. In terms of biological role, an accessory protein needed during the final step in the assembly of 30S ribosomal subunit, possibly for assembly of the head region. Essential for efficient processing of 16S rRNA. May be needed both before and after RbfA during the maturation of 16S rRNA. It has affinity for free ribosomal 30S subunits but not for 70S ribosomes. The chain is Ribosome maturation factor RimM from Frankia casuarinae (strain DSM 45818 / CECT 9043 / HFP020203 / CcI3).